Here is a 129-residue protein sequence, read N- to C-terminus: uncharacterized protein (129 aa).

This is an uncharacterized protein from Methanocaldococcus jannaschii (strain ATCC 43067 / DSM 2661 / JAL-1 / JCM 10045 / NBRC 100440) (Methanococcus jannaschii).